The primary structure comprises 419 residues: UDP-N-acetylglucosamine 1-carboxyvinyltransferase 1 (419 aa).

Phosphoenolpyruvate is bound at residue 22–23; the sequence is KN. Arginine 92 serves as a coordination point for UDP-N-acetyl-alpha-D-glucosamine. Residue cysteine 116 is the Proton donor of the active site. Residue cysteine 116 is modified to 2-(S-cysteinyl)pyruvic acid O-phosphothioketal. UDP-N-acetyl-alpha-D-glucosamine contacts are provided by residues 121 to 125, aspartate 306, and isoleucine 328; that span reads RPIDL.

Belongs to the EPSP synthase family. MurA subfamily.

It is found in the cytoplasm. The enzyme catalyses phosphoenolpyruvate + UDP-N-acetyl-alpha-D-glucosamine = UDP-N-acetyl-3-O-(1-carboxyvinyl)-alpha-D-glucosamine + phosphate. Its pathway is cell wall biogenesis; peptidoglycan biosynthesis. In terms of biological role, cell wall formation. Adds enolpyruvyl to UDP-N-acetylglucosamine. The sequence is that of UDP-N-acetylglucosamine 1-carboxyvinyltransferase 1 from Streptococcus agalactiae serotype Ia (strain ATCC 27591 / A909 / CDC SS700).